Reading from the N-terminus, the 345-residue chain is Succinylglutamate desuccinylase (345 aa).

Zn(2+) is bound by residues His-64, Glu-67, and His-161. Glu-225 is a catalytic residue.

It belongs to the AspA/AstE family. Succinylglutamate desuccinylase subfamily. It depends on Zn(2+) as a cofactor.

It carries out the reaction N-succinyl-L-glutamate + H2O = L-glutamate + succinate. The protein operates within amino-acid degradation; L-arginine degradation via AST pathway; L-glutamate and succinate from L-arginine: step 5/5. Functionally, transforms N(2)-succinylglutamate into succinate and glutamate. The sequence is that of Succinylglutamate desuccinylase from Shewanella piezotolerans (strain WP3 / JCM 13877).